Consider the following 1433-residue polypeptide: Probable serine/threonine-protein kinase DDB_G0277989 (1433 aa).

ATP is bound by residues 1–4 and Lys-41; that span reads MNEI. Positions 1–272 constitute a Protein kinase 1 domain; the sequence is MNEIIVGEYK…EFDDFTHPLS (272 aa). Asp-151 functions as the Proton acceptor in the catalytic mechanism. 2 stretches are compositionally biased toward low complexity: residues 332–362 and 533–550; these read NNNN…NNNN and TATT…TTTA. Disordered regions lie at residues 332–366 and 521–550; these read NNNN…SDGP and PSSE…TTTA. Residues 1177–1433 enclose the Protein kinase 2 domain; the sequence is IYDKRYYIQK…QPHVCKSFKK (257 aa).

This sequence belongs to the protein kinase superfamily. Ser/Thr protein kinase family.

The enzyme catalyses L-seryl-[protein] + ATP = O-phospho-L-seryl-[protein] + ADP + H(+). It catalyses the reaction L-threonyl-[protein] + ATP = O-phospho-L-threonyl-[protein] + ADP + H(+). The sequence is that of Probable serine/threonine-protein kinase DDB_G0277989 from Dictyostelium discoideum (Social amoeba).